Here is a 76-residue protein sequence, read N- to C-terminus: Small nuclear ribonucleoprotein G (76 aa).

The 73-residue stretch at 4–76 (AHPPELKKFM…IIMLEALERV (73 aa)) folds into the Sm domain.

Belongs to the snRNP Sm proteins family. As to quaternary structure, core component of the spliceosomal U1, U2, U4 and U5 small nuclear ribonucleoproteins (snRNPs), the building blocks of the spliceosome. Most spliceosomal snRNPs contain a common set of Sm proteins, SNRPB, SNRPD1, SNRPD2, SNRPD3, SNRPE, SNRPF and SNRPG that assemble in a heptameric protein ring on the Sm site of the small nuclear RNA to form the core snRNP. Component of the U1 snRNP. The U1 snRNP is composed of the U1 snRNA and the 7 core Sm proteins SNRPB, SNRPD1, SNRPD2, SNRPD3, SNRPE, SNRPF and SNRPG, and at least three U1 snRNP-specific proteins SNRNP70/U1-70K, SNRPA/U1-A and SNRPC/U1-C. Component of the U4/U6-U5 tri-snRNP complex composed of the U4, U6 and U5 snRNAs and at least PRPF3, PRPF4, PRPF6, PRPF8, PRPF31, SNRNP200, TXNL4A, SNRNP40, SNRPB, SNRPD1, SNRPD2, SNRPD3, SNRPE, SNRPF, SNRPG, DDX23, CD2BP2, PPIH, SNU13, EFTUD2, SART1 and USP39, plus LSM2, LSM3, LSM4, LSM5, LSM6, LSM7 and LSM8. Component of the U7 snRNP complex, or U7 Sm protein core complex, that is composed of the U7 snRNA and at least LSM10, LSM11, SNRPB, SNRPD3, SNRPE, SNRPF and SNRPG; the complex does not contain SNRPD1 and SNRPD2. Component of the minor spliceosome, which splices U12-type introns. Part of the SMN-Sm complex that contains SMN1, GEMIN2/SIP1, DDX20/GEMIN3, GEMIN4, GEMIN5, GEMIN6, GEMIN7, GEMIN8, STRAP/UNRIP and the Sm proteins SNRPB, SNRPD1, SNRPD2, SNRPD3, SNRPE, SNRPF and SNRPG; catalyzes core snRNPs assembly. Forms a 6S pICln-Sm complex composed of CLNS1A/pICln, SNRPD1, SNRPD2, SNRPE, SNRPF and SNRPG; ring-like structure where CLNS1A/pICln mimics additional Sm proteins and which is unable to assemble into the core snRNP. Interacts with GEMIN2 (via N-terminus); the interaction is direct. Interacts with SNRPE; the interaction is direct.

It localises to the cytoplasm. It is found in the cytosol. The protein localises to the nucleus. Plays a role in pre-mRNA splicing as a core component of the spliceosomal U1, U2, U4 and U5 small nuclear ribonucleoproteins (snRNPs), the building blocks of the spliceosome. Component of both the pre-catalytic spliceosome B complex and activated spliceosome C complexes. As a component of the minor spliceosome, involved in the splicing of U12-type introns in pre-mRNAs. As part of the U7 snRNP it is involved in histone 3'-end processing. The protein is Small nuclear ribonucleoprotein G (SNRPG) of Bos taurus (Bovine).